The chain runs to 1907 residues: MAPEPAPGRTMVPLVPALVMLGLVAGAHGDSKPVFIKVPEDQTGLSGGVASFVCQATGEPKPRITWMKKGKKVSSQRFEVIEFDDGAGSVLRIQPLRVQRDEAIYECTATNSLGEINTSAKLSVLEEEQLPPGFPSIDMGPQLKVVEKARTATMLCAAGGNPDPEISWFKDFLPVDPATSNGRIKQLRSGALQIESSEESDQGKYECVATNSAGTRYSAPANLYVRVRRVAPRFSIPPSSQEVMPGGSVNLTCVAVGAPMPYVKWMMGAEELTKEDEMPVGRNVLELSNVVRSANYTCVAISSLGMIEATAQVTVKALPKPPIDLVVTETTATSVTLTWDSGNSEPVTYYGIQYRAAGTEGPFQEVDGVATTRYSIGGLSPFSEYAFRVLAVNSIGRGPPSEAVRARTGEQAPSSPPRRVQARMLSASTMLVQWEPPEEPNGLVRGYRVYYTPDSRRPPNAWHKHNTDAGLLTTVGSLLPGITYSLRVLAFTAVGDGPPSPTIQVKTQQGVPAQPADFQAEVESDTRIQLSWLLPPQERIIMYELVYWAAEDEDQQHKVTFDPTSSYTLEDLKPDTLYRFQLAARSDMGVGVFTPTIEARTAQSTPSAPPQKVMCVSMGSTTVRVSWVPPPADSRNGVITQYSVAYEAVDGEDRGRHVVDGISREHSSWDLVGLEKWTEYRVWVRAHTDVGPGPESSPVLVRTDEDVPSGPPRKVEVEPLNSTAVHVYWKLPVPSKQHGQIRGYQVTYVRLENGEPRGLPIIQDVMLAEAQWRPEESEDYETTISGLTPETTYSVTVAAYTTKGDGARSKPKIVTTTGAVPGRPTMMISTTAMNTALLQWHPPKELPGELLGYRLQYCRADEARPNTIDFGKDDQHFTVTGLHKGTTYIFRLAAKNRAGLGEEFEKEIRTPEDLPSGFPQNLHVTGLTTSTTELAWDPPVLAERNGRIISYTVVFRDINSQQELQNITTDTRFTLTGLKPDTTYDIKVRAWTSKGSGPLSPSIQSRTMPVEQVFAKNFRVAAAMKTSVLLSWEVPDSYKSAVPFKILYNGQSVEVDGHSMRKLIADLQPNTEYSFVLMNRGSSAGGLQHLVSIRTAPDLLPHKPLPASAYIEDGRFDLSMPHVQDPSLVRWFYIVVVPIDRVGGSMLTPRWSTPEELELDELLEAIEQGGEEQRRRRRQAERLKPYVAAQLDVLPETFTLGDKKNYRGFYNRPLSPDLSYQCFVLASLKEPMDQKRYASSPYSDEIVVQVTPAQQQEEPEMLWVTGPVLAVILIILIVIAILLFKRKRTHSPSSKDEQSIGLKDSLLAHSSDPVEMRRLNYQTPGMRDHPPIPITDLADNIERLKANDGLKFSQEYESIDPGQQFTWENSNLEVNKPKNRYANVIAYDHSRVILTSIDGVPGSDYINANYIDGYRKQNAYIATQGPLPETMGDFWRMVWEQRTATVVMMTRLEEKSRVKCDQYWPARGTETCGLIQVTLLDTVELATYTVRTFALHKSGSSEKRELRQFQFMAWPDHGVPEYPTPILAFLRRVKACNPLDAGPMVVHCSAGVGRTGCFIVIDAMLERMKHEKTVDIYGHVTCMRSQRNYMVQTEDQYVFIHEALLEAATCGHTEVPARNLYAHIQKLGQVPPGESVTAMELEFKLLASSKAHTSRFISANLPCNKFKNRLVNIMPYELTRVCLQPIRGVEGSDYINASFLDGYRQQKAYIATQGPLAESTEDFWRMLWEHNSTIIVMLTKLREMGREKCHQYWPAERSARYQYFVVDPMAEYNMPQYILREFKVTDARDGQSRTIRQFQFTDWPEQGVPKTGEGFIDFIGQVHKTKEQFGQDGPITVHCSAGVGRTGVFITLSIVLERMRYEGVVDMFQTVKTLRTQRPAMVQTEDQYQLCYRAALEYLGSFDHYAT.

An N-terminal signal peptide occupies residues 1–29 (MAPEPAPGRTMVPLVPALVMLGLVAGAHG). Over 30 to 1263 (DSKPVFIKVP…QQQEEPEMLW (1234 aa)) the chain is Extracellular. Ig-like C2-type domains follow at residues 33–123 (PVFI…AKLS), 135–224 (PSID…ANLY), and 232–314 (PRFS…AQVT). Residues Cys54 and Cys107 are joined by a disulfide bond. 68–77 (KKGKKVSSQR) provides a ligand contact to heparin. An N-linked (GlcNAc...) asparagine glycan is attached at Asn117. An intrachain disulfide couples Cys156 to Cys207. 2 N-linked (GlcNAc...) asparagine glycosylation sites follow: Asn250 and Asn295. A disulfide bridge links Cys253 with Cys298. Fibronectin type-III domains are found at residues 321 to 411 (PPID…TGEQ), 416 to 510 (PPRR…TQQG), 514 to 604 (QPAD…TAQS), 609 to 706 (PPQK…TDED), 711 to 819 (PPRK…TTGA), 820 to 914 (VPGR…PEDL), 918 to 1010 (FPQN…TMPV), and 1014 to 1098 (FAKN…TAPD). Residues 398 to 417 (GPPSEAVRARTGEQAPSSPP) are disordered. Residues 693–712 (GPESSPVLVRTDEDVPSGPP) are disordered. Asn721 is a glycosylation site (N-linked (GlcNAc...) asparagine). Asn966 carries N-linked (GlcNAc...) asparagine glycosylation. A helical transmembrane segment spans residues 1264-1284 (VTGPVLAVILIILIVIAILLF). Residues 1285-1907 (KRKRTHSPSS…YLGSFDHYAT (623 aa)) are Cytoplasmic-facing. A Phosphoserine modification is found at Ser1305. Tyrosine-protein phosphatase domains are found at residues 1352–1607 (FSQE…LLEA) and 1639–1898 (MELE…ALEY). Residues Asp1516, 1548–1554 (CSAGVGR), and Gln1592 contribute to the substrate site. The active-site Phosphocysteine intermediate is Cys1548. Cys1839 acts as the Phosphocysteine intermediate in catalysis.

Belongs to the protein-tyrosine phosphatase family. Receptor class 2A subfamily. Interacts with GRIP1. Interacts with PPFIA1, PPFIA2 and PPFIA3. Interacts with INSR.

Its subcellular location is the membrane. The enzyme catalyses O-phospho-L-tyrosyl-[protein] + H2O = L-tyrosyl-[protein] + phosphate. Possible cell adhesion receptor. It possesses an intrinsic protein tyrosine phosphatase activity (PTPase) and dephosphorylates EPHA2 regulating its activity. Functionally, the first PTPase domain has enzymatic activity, while the second one seems to affect the substrate specificity of the first one. The protein is Receptor-type tyrosine-protein phosphatase F (PTPRF) of Homo sapiens (Human).